A 352-amino-acid polypeptide reads, in one-letter code: Putative [LysW]-L-2-aminoadipate/[LysW]-L-glutamate phosphate reductase (352 aa).

Residues 10–13 and 34–36 each bind NADP(+); these read SGFT and SRR. C151 is a catalytic residue. NADP(+) is bound at residue N319.

The protein belongs to the NAGSA dehydrogenase family. Type 1 subfamily. LysY sub-subfamily.

It is found in the cytoplasm. It catalyses the reaction [amino-group carrier protein]-C-terminal-N-(1-carboxy-5-oxopentan-1-yl)-L-glutamine + phosphate + NADP(+) = [amino-group carrier protein]-C-terminal-N-(1-carboxy-5-phosphooxy-5-oxopentan-1-yl)-L-glutamine + NADPH + H(+). The catalysed reaction is [amino-group carrier protein]-C-terminal-gamma-(L-glutamyl-5-semialdehyde)-L-glutamate + phosphate + NADP(+) = [amino-group carrier protein]-C-terminal-gamma-(5-phospho-L-glutamyl)-L-glutamate + NADPH + H(+). Its pathway is amino-acid biosynthesis; L-lysine biosynthesis via AAA pathway; L-lysine from L-alpha-aminoadipate (Thermus route): step 3/5. It participates in amino-acid biosynthesis; L-arginine biosynthesis. Involved in both the arginine and lysine biosynthetic pathways. The sequence is that of Putative [LysW]-L-2-aminoadipate/[LysW]-L-glutamate phosphate reductase from Pyrobaculum islandicum (strain DSM 4184 / JCM 9189 / GEO3).